The primary structure comprises 920 residues: Coatomer subunit beta'-1 (920 aa).

WD repeat units follow at residues 13 to 52, 55 to 94, 97 to 136, 140 to 180, 183 to 224, 227 to 266, 350 to 392, and 460 to 500; these read QRSE…MVKS, VTEL…KIKV, AHAD…LCTQ, GHSH…PNFT, AHLK…CVQT, GHTH…LENT, TCDL…GSAL, and RIDV…SYFD. A disordered region spans residues 850–920; the sequence is LEQGDVLDEV…EQWVLTPPQE (71 aa). The segment covering 854–875 has biased composition (acidic residues); sequence DVLDEVGEEGEDGEEEEEEDRQ.

It belongs to the WD repeat COPB2 family. In terms of assembly, oligomeric complex that consists of at least the alpha, beta, beta', gamma, delta, epsilon and zeta subunits.

It is found in the cytoplasm. It localises to the golgi apparatus membrane. The protein resides in the cytoplasmic vesicle. The protein localises to the COPI-coated vesicle membrane. Functionally, the coatomer is a cytosolic protein complex that binds to dilysine motifs and reversibly associates with Golgi non-clathrin-coated vesicles, which further mediate biosynthetic protein transport from the ER, via the Golgi up to the trans Golgi network. Coatomer complex is required for budding from Golgi membranes, and is essential for the retrograde Golgi-to-ER transport of dilysine-tagged proteins. The polypeptide is Coatomer subunit beta'-1 (Arabidopsis thaliana (Mouse-ear cress)).